A 107-amino-acid chain; its full sequence is Large ribosomal subunit protein uL24 (107 aa).

Belongs to the universal ribosomal protein uL24 family. Part of the 50S ribosomal subunit.

Its function is as follows. One of two assembly initiator proteins, it binds directly to the 5'-end of the 23S rRNA, where it nucleates assembly of the 50S subunit. Functionally, one of the proteins that surrounds the polypeptide exit tunnel on the outside of the subunit. In Mycobacterium ulcerans (strain Agy99), this protein is Large ribosomal subunit protein uL24.